The sequence spans 164 residues: Phosphopantetheine adenylyltransferase (164 aa).

Position 9 (Ser9) interacts with substrate. ATP-binding positions include 9–10 (SF) and His17. 3 residues coordinate substrate: Lys41, Leu73, and Lys87. ATP is bound by residues 88–90 (GLR), Glu98, and 123–129 (YSYLSSS).

Belongs to the bacterial CoaD family. In terms of assembly, homohexamer. Mg(2+) serves as cofactor.

The protein resides in the cytoplasm. The enzyme catalyses (R)-4'-phosphopantetheine + ATP + H(+) = 3'-dephospho-CoA + diphosphate. It functions in the pathway cofactor biosynthesis; coenzyme A biosynthesis; CoA from (R)-pantothenate: step 4/5. In terms of biological role, reversibly transfers an adenylyl group from ATP to 4'-phosphopantetheine, yielding dephospho-CoA (dPCoA) and pyrophosphate. This chain is Phosphopantetheine adenylyltransferase, found in Clostridium botulinum (strain ATCC 19397 / Type A).